Reading from the N-terminus, the 359-residue chain is Mitochondrial glutathione transporter SLC25A39 (359 aa).

Residues 1 to 14 (MDDQDPGGISPLQQ) are Mitochondrial intermembrane-facing. 3 Solcar repeats span residues 9 to 151 (ISPL…LKAF), 159 to 243 (SDLY…VKSQ), and 253 to 347 (TSVG…GKSF). The helical transmembrane segment at 15–35 (MVASGAGAVVTSLFMTPLDVV) threads the bilayer. The Mitochondrial matrix portion of the chain corresponds to 36–121 (KVRLQSQRPT…VKIVRHEGTR (86 aa)). [2Fe-2S] cluster is bound by residues Cys74, Cys78, Cys88, and Cys94. The helical transmembrane segment at 122–142 (TLWSGLPATLVMTVPATAIYF) threads the bilayer. The Mitochondrial intermembrane portion of the chain corresponds to 143 to 164 (TAYDQLKAFLCGQSLTSDLYAP). A helical membrane pass occupies residues 165–185 (MVAGALARMGTVTVVSPLELV). The Mitochondrial matrix segment spans residues 186–214 (RTKLQAQHVSYRELAACVQAAVAQGGWRS). The chain crosses the membrane as a helical span at residues 215-235 (LWLGWGPTALRDVPFSALYWF). At 236-255 (NYELVKSQLNGPRQKEQTSV) the chain is on the mitochondrial intermembrane side. The helical transmembrane segment at 256-276 (GISFVAGGISGMVAATLTLPF) threads the bilayer. The Mitochondrial matrix portion of the chain corresponds to 277-317 (DVVKTQRQMSLGAVEAMRVKPPRVDSTWLLLRRIQAESGTR). Residues 318–338 (GLFAGFLPRIIKAAPSCAIMI) traverse the membrane as a helical segment. Topologically, residues 339-359 (STYEFGKSFFHRLNQEQPLGH) are mitochondrial intermembrane.

Belongs to the mitochondrial carrier (TC 2.A.29) family. Post-translationally, cleaved and degraded by AFG3L2; degradation by AFG3L2 is regulated by the ability of SLC25A39 to bind iron-sulfur. In absence of mitochondrial glutathione, SLC25A39 binds iron-sulfur, preventing cleavage and degradation by AFG3L2. The presence of mitochondrial glutathione prevents iron-sulfur-binding to SLC25A39, promoting cleavage and degradation by AFG3L2.

The protein localises to the mitochondrion inner membrane. The catalysed reaction is glutathione(in) = glutathione(out). Its activity is regulated as follows. The activity of SLC25A39 is regulated by levels of mitochondrial glutathione via its ability to bind [2Fe-2S] iron-sulfur cluster. Upon physiological levels of mitochondrial glutathione, glutathione prevents iron-sulfur-binding to SLC25A39 promoting cleavage and degradation by AFG3L2. Upon depletion of mitochondrial glutathione, SLC25A39 binds iron-sulfur, preventing cleavage and degradation by AFG3L2. Functionally, mitochondrial transporter required for glutathione import into mitochondria. Glutathione, which plays key roles in oxidative metabolism, is produced exclusively in the cytosol and is imported in many organelles. Mitochondrial glutathione is required for the activity and stability of proteins containing iron-sulfur clusters, as well as erythropoiesis. In Rattus norvegicus (Rat), this protein is Mitochondrial glutathione transporter SLC25A39 (Slc25a39).